We begin with the raw amino-acid sequence, 470 residues long: 5-hydroxytryptamine receptor 2A (470 aa).

A disordered region spans residues 1-23; sequence MDVLFEDNAPLSPTTSSLMPSNG. The Extracellular segment spans residues 1 to 80; it reads MDVLFEDNAP…LQEKNWSALL (80 aa). Positions 10–21 are enriched in low complexity; that stretch reads PLSPTTSSLMPS. N-linked (GlcNAc...) asparagine glycosylation is found at N38, N44, N51, and N54. Residues 81–97 traverse the membrane as a helical segment; sequence TAVVIILTIAGNILVIM. The Cytoplasmic portion of the chain corresponds to 98–111; that stretch reads AVSLEKKLQNATNY. The helical transmembrane segment at 112 to 137 threads the bilayer; it reads FLMSLAIADMLLGFLVMPVSMLTILY. Over 138-146 the chain is Extracellular; sequence GYRWPLPSK. A helical transmembrane segment spans residues 147-171; sequence LCAVWIYLDVLFSTASIMHLCAISL. The cysteines at positions 148 and 227 are disulfide-linked. Serotonin is bound at residue D155. Positions 172 to 174 match the DRY motif; important for ligand-induced conformation changes motif; the sequence is DRY. Residues 172 to 191 are Cytoplasmic-facing; the sequence is DRYVAIQNPIHHSRFNSRTK. Residues 192 to 215 traverse the membrane as a helical segment; that stretch reads AFLKIIAVWTISVGISMPIPVFGL. Over 216–232 the chain is Extracellular; the sequence is QDDSKVFKEGSCLLADD. Residues 233-258 form a helical membrane-spanning segment; sequence NFVLIGSFVSFFIPLTIMVITYFLTI. The Cytoplasmic portion of the chain corresponds to 259 to 321; the sequence is KSLQKEATLC…QSISNEQKAC (63 aa). S280 bears the Phosphoserine mark. A helical transmembrane segment spans residues 322-347; sequence KVLGIVFFLFVVMWCPFFITNIMAVI. Residue N342 coordinates serotonin. The cysteines at positions 348 and 352 are disulfide-linked. Residues 348-355 are Extracellular-facing; sequence CKESCNED. A helical membrane pass occupies residues 356–381; that stretch reads IIGALLNVFVWIGYLSSAVNPLVYTL. The short motif at 375-379 is the NPxxY motif; important for ligand-induced conformation changes and signaling element; sequence NPLVY. Topologically, residues 382 to 470 are cytoplasmic; it reads FNKTYRSAFS…NTVNEKVSCV (89 aa). The PDZ-binding signature appears at 468–470; sequence SCV.

It belongs to the G-protein coupled receptor 1 family. In terms of assembly, interacts (via C-terminus) with MPDZ and PATJ. May interact (via C-terminus) with MPP3, PRDX6, DLG4, DLG1, CASK, APBA1 and MAGI2. Interacts with GRM2 and DRD2; this may affect signaling. Ubiquitous.

It localises to the cell membrane. Its subcellular location is the cell projection. It is found in the dendrite. The protein resides in the axon. The protein localises to the cytoplasmic vesicle. It localises to the membrane. Its subcellular location is the caveola. It is found in the presynapse. Its activity is regulated as follows. G-protein coupled receptor activity is regulated by lipids: oleamide increases HTR2A-mediated activity. Functionally, G-protein coupled receptor for 5-hydroxytryptamine (serotonin). Also functions as a receptor for various drugs and psychoactive substances, including mescaline, psilocybin, 1-(2,5-dimethoxy-4-iodophenyl)-2-aminopropane (DOI) and lysergic acid diethylamide (LSD). Ligand binding causes a conformation change that triggers signaling via guanine nucleotide-binding proteins (G proteins) and modulates the activity of downstream effectors. HTR2A is coupled to G(q)/G(11) G alpha proteins and activates phospholipase C-beta, releasing diacylglycerol (DAG) and inositol 1,4,5-trisphosphate (IP3) second messengers that modulate the activity of phosphatidylinositol 3-kinase and promote the release of Ca(2+) ions from intracellular stores, respectively. Beta-arrestin family members inhibit signaling via G proteins and mediate activation of alternative signaling pathways. Affects neural activity, perception, cognition and mood. Plays a role in the regulation of behavior, including responses to anxiogenic situations and psychoactive substances. Plays a role in intestinal smooth muscle contraction, and may play a role in arterial vasoconstriction. The polypeptide is 5-hydroxytryptamine receptor 2A (HTR2A) (Canis lupus familiaris (Dog)).